The primary structure comprises 402 residues: CinA-like protein (402 aa).

It belongs to the CinA family.

In Escherichia coli O17:K52:H18 (strain UMN026 / ExPEC), this protein is CinA-like protein.